Reading from the N-terminus, the 63-residue chain is DNA gyrase inhibitor YacG (63 aa).

Positions 10, 13, 29, and 33 each coordinate Zn(2+).

This sequence belongs to the DNA gyrase inhibitor YacG family. In terms of assembly, interacts with GyrB. The cofactor is Zn(2+).

In terms of biological role, inhibits all the catalytic activities of DNA gyrase by preventing its interaction with DNA. Acts by binding directly to the C-terminal domain of GyrB, which probably disrupts DNA binding by the gyrase. This is DNA gyrase inhibitor YacG from Chromobacterium violaceum (strain ATCC 12472 / DSM 30191 / JCM 1249 / CCUG 213 / NBRC 12614 / NCIMB 9131 / NCTC 9757 / MK).